The sequence spans 299 residues: tRNA uridine(34) hydroxylase (299 aa).

Positions 132–226 constitute a Rhodanese domain; that stretch reads ASRPVVMLDT…YFEEVGGAHY (95 aa). The Cysteine persulfide intermediate role is filled by cysteine 186.

Belongs to the TrhO family.

The enzyme catalyses uridine(34) in tRNA + AH2 + O2 = 5-hydroxyuridine(34) in tRNA + A + H2O. Its function is as follows. Catalyzes oxygen-dependent 5-hydroxyuridine (ho5U) modification at position 34 in tRNAs. The sequence is that of tRNA uridine(34) hydroxylase from Burkholderia pseudomallei (strain K96243).